The primary structure comprises 865 residues: Lactose regulatory protein LAC9 (865 aa).

Over residues 1-15 the composition is skewed to polar residues; that stretch reads MGSRASNSPSFSSKA. The disordered stretch occupies residues 1–87; it reads MGSRASNSPS…NNNNNNNKKS (87 aa). The span at 22-34 shows a compositional bias: basic and acidic residues; sequence EYKKNAVKKETIR. Over residues 67–85 the composition is skewed to low complexity; that stretch reads SNGNKNDSNANNNNNNNNK. Zn(2+) contacts are provided by C95, C98, C105, C112, C115, and C122. Positions 95-122 form a DNA-binding region, zn(2)-C6 fungal-type; the sequence is CDACRKKKWKCSKTVPTCTNCLKYNLDC. A disordered region spans residues 818-840; that stretch reads LQSSTTQMRPPTTSGWPDTNNFL.

Its subcellular location is the nucleus. Functionally, positive regulatory protein, that controls induction of the lactose-galactose regulation of Kluyveromyces lactis. The polypeptide is Lactose regulatory protein LAC9 (LAC9) (Kluyveromyces lactis (strain ATCC 8585 / CBS 2359 / DSM 70799 / NBRC 1267 / NRRL Y-1140 / WM37) (Yeast)).